The following is a 210-amino-acid chain: MSSLFITATGTNVGKTHTTLKLLDALAAKGRSVGVFKPIETGVLDSAPDATILLESCRKVNRNFEGLKTEDITAYTFPLPAAPFCADTNHKIRIDRILEKYHQLSQLCDILLVEGAGGLMVPVTRDFFMIDLIKELQTRVLLVTPGRLGCINDTLLSMEALKSRNIAFDWCINLYEDAESFTEVTQPFYDAVFPAWWSDKEGMEKFARSL.

12 to 17 (NVGKTH) is an ATP binding site. Residue T16 participates in Mg(2+) binding. K37 is a catalytic residue. T41 is a substrate binding site. A Mg(2+)-binding site is contributed by E114. Residue 114–117 (EGAG) coordinates ATP.

This sequence belongs to the dethiobiotin synthetase family. Homodimer. Mg(2+) serves as cofactor.

The protein resides in the cytoplasm. The catalysed reaction is (7R,8S)-7,8-diammoniononanoate + CO2 + ATP = (4R,5S)-dethiobiotin + ADP + phosphate + 3 H(+). It functions in the pathway cofactor biosynthesis; biotin biosynthesis; biotin from 7,8-diaminononanoate: step 1/2. Functionally, catalyzes a mechanistically unusual reaction, the ATP-dependent insertion of CO2 between the N7 and N8 nitrogen atoms of 7,8-diaminopelargonic acid (DAPA, also called 7,8-diammoniononanoate) to form a ureido ring. This chain is ATP-dependent dethiobiotin synthetase BioD, found in Sulfurovum sp. (strain NBC37-1).